Reading from the N-terminus, the 484-residue chain is Crt homolog 2 (484 aa).

Over 1 to 57 (MSEEKLPLLSPLNENDIENDYKDENLKSDLDKLSNVKKQSIIQRFKDYLKNSISKQT) the chain is Cytoplasmic. Residues 58–78 (ATVLVYVVLYILSGVINSLLL) traverse the membrane as a helical segment. Residues 79 to 94 (KKVMNVFTNYGFFLNQ) are Vacuolar-facing. The helical transmembrane segment at 95–115 (LTNYGYVPIFGAIVLYKILFT) threads the bilayer. The Cytoplasmic segment spans residues 116–128 (NDIPKDTRSFPQW). A helical transmembrane segment spans residues 129–149 (KFVIMGALDAVTGYFVVIGGI). Topologically, residues 150-154 (KTTGP) are vacuolar. The chain crosses the membrane as a helical span at residues 155–175 (LQQLLNQSVIPFTMLLSFIFL). Residues 176 to 178 (KER) are Cytoplasmic-facing. The chain crosses the membrane as a helical span at residues 179–199 (YSLIQLGGALIIIGGVVVSLI). Residues 200–210 (PSLTGGNTSGN) are Vacuolar-facing. N-linked (GlcNAc...) asparagine glycosylation occurs at Asn-206. The chain crosses the membrane as a helical span at residues 211 to 231 (MLFYNFFYLISMIPYAFSNVY). Residues 232–244 (KAIGFSTVEDMDV) are Cytoplasmic-facing. Residues 245–265 (WYLQYFDALYQSLVGTVLFPI) traverse the membrane as a helical segment. At 266-328 (NNWLPPPSDM…LGCDNCHGAW (63 aa)) the chain is on the vacuolar side. Asn-302 carries an N-linked (GlcNAc...) asparagine glycan. The chain crosses the membrane as a helical span at residues 329–349 (VVVLIYMAVNVLYNVFILLVL). The Cytoplasmic segment spans residues 350-355 (KHAGAT). A helical transmembrane segment spans residues 356-378 (VFSIANTLRLPLTNIAFSFKFIM). The Vacuolar portion of the chain corresponds to 379 to 382 (GSDS). Residues 383–403 (NPFSGLSVAGLCIILLGLGGY) form a helical membrane-spanning segment. The Cytoplasmic segment spans residues 404–484 (RVGSMIKQKK…RNQNSIYGDQ (81 aa)).

The protein belongs to the CRT-like transporter family.

It is found in the vacuole membrane. Nutrient transporter. Involved in maintaining the osmotic homeostasis of the digestive vacuole. The chain is Crt homolog 2 (crtp2) from Dictyostelium discoideum (Social amoeba).